Here is a 362-residue protein sequence, read N- to C-terminus: MTEALISAALNGTQPELLAGGWAAGNASTKCSLTKTGFQFYYLPTVYILVFITGFLGNSVAIWMFVFHMRPWSGISVYMFNLALADFLYVLTLPALIFYYFNKTDWIFGDVMCKLQRFIFHVNLYGSILFLTCISVHRYTGVVHPLKSLGRLKKKNAVYVSSLVWALVVAVIAPILFYSGTGVRRNKTITCYDTTADEYLRSYFVYSMCTTVFMFCIPFIVILGCYGLIVKALIYKDLDNSPLRRKSIYLVIIVLTVFAVSYLPFHVMKTLNLRARLDFQTPQMCAFNDKVYATYQVTRGLASLNSCVDPILYFLAGDTFRRRLSRATRKSSRRSEPNVQSKSEEMTLNILTEYKQNGDTSL.

The Extracellular segment spans residues 1–40; sequence MTEALISAALNGTQPELLAGGWAAGNASTKCSLTKTGFQF. 2 N-linked (GlcNAc...) asparagine glycosylation sites follow: Asn11 and Asn26. 2 cysteine pairs are disulfide-bonded: Cys31/Cys285 and Cys113/Cys191. Residue Lys35 participates in ADP binding. A helical membrane pass occupies residues 41 to 63; that stretch reads YYLPTVYILVFITGFLGNSVAIW. Residues 64–76 lie on the Cytoplasmic side of the membrane; it reads MFVFHMRPWSGIS. The helical transmembrane segment at 77–98 threads the bilayer; it reads VYMFNLALADFLYVLTLPALIF. Over 99-114 the chain is Extracellular; the sequence is YYFNKTDWIFGDVMCK. Residue Asn102 is glycosylated (N-linked (GlcNAc...) asparagine). The chain crosses the membrane as a helical span at residues 115–136; that stretch reads LQRFIFHVNLYGSILFLTCISV. The Cytoplasmic segment spans residues 137–155; it reads HRYTGVVHPLKSLGRLKKK. Residues 156–177 traverse the membrane as a helical segment; sequence NAVYVSSLVWALVVAVIAPILF. The Extracellular portion of the chain corresponds to 178 to 203; it reads YSGTGVRRNKTITCYDTTADEYLRSY. The N-linked (GlcNAc...) asparagine glycan is linked to Asn186. 192 to 194 is a binding site for ADP; sequence YDT. Residues 204–226 traverse the membrane as a helical segment; it reads FVYSMCTTVFMFCIPFIVILGCY. At 227–249 the chain is on the cytoplasmic side; it reads GLIVKALIYKDLDNSPLRRKSIY. Residues 250-273 form a helical membrane-spanning segment; the sequence is LVIIVLTVFAVSYLPFHVMKTLNL. Residues 272 to 276, 292 to 295, and Arg299 contribute to the ADP site; these read NLRAR and YATY. Topologically, residues 274–292 are extracellular; that stretch reads RARLDFQTPQMCAFNDKVY. Residues 293-314 traverse the membrane as a helical segment; that stretch reads ATYQVTRGLASLNSCVDPILYF. The Cytoplasmic portion of the chain corresponds to 315 to 362; that stretch reads LAGDTFRRRLSRATRKSSRRSEPNVQSKSEEMTLNILTEYKQNGDTSL.

It belongs to the G-protein coupled receptor 1 family. Mainly found in blood, brain, and lung. To a lesser extent in stomach, gut and skeletal muscle.

The protein localises to the cell membrane. Functionally, receptor for extracellular adenine nucleotides such as ADP. In platelets, binding to ADP leads to mobilization of intracellular calcium ions via activation of phospholipase C, a change in platelet shape, and ultimately platelet aggregation. The sequence is that of P2Y purinoceptor 1 (P2RY1) from Meleagris gallopavo (Wild turkey).